The following is a 347-amino-acid chain: GMP reductase (347 aa).

108-131 (ADFEKTKQILDLNPALNFVCIDVA) serves as a coordination point for NADP(+). Glycine 181 and glycine 183 together coordinate K(+). The active-site Thioimidate intermediate is cysteine 186. 216-239 (IVSDGGCTTPGDVAKAFGGGADFV) is an NADP(+) binding site.

This sequence belongs to the IMPDH/GMPR family. GuaC type 1 subfamily. In terms of assembly, homotetramer.

The enzyme catalyses IMP + NH4(+) + NADP(+) = GMP + NADPH + 2 H(+). Functionally, catalyzes the irreversible NADPH-dependent deamination of GMP to IMP. It functions in the conversion of nucleobase, nucleoside and nucleotide derivatives of G to A nucleotides, and in maintaining the intracellular balance of A and G nucleotides. The chain is GMP reductase from Escherichia coli O139:H28 (strain E24377A / ETEC).